The sequence spans 265 residues: Apolipoprotein A-I (265 aa).

A signal peptide spans 1–18; the sequence is MKAVVLAVAALFLAGGEA. 2 tandem repeats follow at residues 68 to 89 and 90 to 111. Positions 68–265 are 10 X approximate tandem repeats; that stretch reads LKLTENLDTL…EEASKKLSSQ (198 aa). At Met110 the chain carries Methionine sulfoxide. One copy of the 3; half-length repeat lies at 112–122; it reads KDLADMKQKVQ. Repeat copies occupy residues 123-144, 145-166, and 167-188. One copy of the 7; truncated repeat lies at 189–208; that stretch reads PYSEQMRERLAERLAALRDS. Position 194 is a methionine sulfoxide (Met194). The stretch at 209–230 is repeat 8; it reads PSLAEYQAKAHEHLKTLHEKAQ. One copy of the 9; half-length repeat lies at 231–241; that stretch reads PALSDLGQGVL. Repeat 10 spans residues 242–265; the sequence is PVLESLKATLVGAIEEASKKLSSQ.

Belongs to the apolipoprotein A1/A4/E family. In terms of assembly, homodimer. Interacts with APOA1BP and CLU. Component of a sperm activating protein complex (SPAP), consisting of APOA1, an immunoglobulin heavy chain, an immunoglobulin light chain and albumin. Interacts with NDRG1. Interacts with SCGB3A2. Interacts with NAXE and YJEFN3. Glycosylated. In terms of processing, palmitoylated. Post-translationally, phosphorylation sites are present in the extracellular medium.

The protein localises to the secreted. Functionally, participates in the reverse transport of cholesterol from tissues to the liver for excretion by promoting cholesterol efflux from tissues and by acting as a cofactor for the lecithin cholesterol acyltransferase (LCAT). As part of the SPAP complex, activates spermatozoa motility. This chain is Apolipoprotein A-I (Apoa1), found in Dipodomys ordii (Ord's kangaroo rat).